Consider the following 367-residue polypeptide: Aminomethyltransferase (367 aa).

This sequence belongs to the GcvT family. The glycine cleavage system is composed of four proteins: P, T, L and H.

The enzyme catalyses N(6)-[(R)-S(8)-aminomethyldihydrolipoyl]-L-lysyl-[protein] + (6S)-5,6,7,8-tetrahydrofolate = N(6)-[(R)-dihydrolipoyl]-L-lysyl-[protein] + (6R)-5,10-methylene-5,6,7,8-tetrahydrofolate + NH4(+). Its function is as follows. The glycine cleavage system catalyzes the degradation of glycine. The protein is Aminomethyltransferase of Mycobacterium leprae (strain Br4923).